A 239-amino-acid polypeptide reads, in one-letter code: MESKMILKDGCQELGFHIDDNQVQQLLTYKDILLEWNEKMNLTAITEEEEVMVKHFLDSLSCIQSQYLKEEGTMIDVGTGAGFPGIPLKVYFPKLKLTLLDSLNKRVEFLKEVSQELGLEDVNFVHGRAEECGQEETHREQYDYAVARAVASLNVLVEYCLPFVKVGGYFICQKGPQLKEEIQNSQNAITVLGGKVVEQKEITLPFSDITHSLLVIEKIKQTPTKYPRKPGTPSKKPIK.

Residues Gly78, Phe83, 129-130 (AE), and Arg148 contribute to the S-adenosyl-L-methionine site.

It belongs to the methyltransferase superfamily. RNA methyltransferase RsmG family.

It is found in the cytoplasm. Its function is as follows. Specifically methylates the N7 position of a guanine in 16S rRNA. The sequence is that of Ribosomal RNA small subunit methyltransferase G from Alkaliphilus metalliredigens (strain QYMF).